Consider the following 269-residue polypeptide: Growth-regulating factor 11 (269 aa).

Residues 1–11 (MAAEGEAKKDS) are compositionally biased toward basic and acidic residues. The segment at 1–71 (MAAEGEAKKD…GKEDVEEGGV (71 aa)) is disordered. Residues 43–52 (GEAGGGGGGG) show a composition bias toward gly residues. Positions 58–68 (EEEEGKEDVEE) are enriched in acidic residues. The region spanning 114–149 (AFTAMQLQELEQQSRVYQYMAARVPVPTHLVFPIWK) is the QLQ domain. Positions 180–224 (EPEPGRCRRTDGKKWRCWRNAIANEKYCERHMHRGRKRPVQLVVE) constitute a WRC domain. 2 short sequence motifs (bipartite nuclear localization signal) span residues 185-195 (RCRRTDGKKWR) and 213-217 (RGRKR). The interval 212–269 (HRGRKRPVQLVVEDDEPDSTSGSKPASGKATEGGKKTDDKSSSSKKLAVAAPAAVEST) is disordered. Residues 243-253 (EGGKKTDDKSS) are compositionally biased toward basic and acidic residues. Over residues 255–269 (SKKLAVAAPAAVEST) the composition is skewed to low complexity.

It belongs to the GRF family.

The protein resides in the nucleus. Transcription activator that plays a regulatory role in gibberellin-induced stem elongation. The sequence is that of Growth-regulating factor 11 (GRF11) from Oryza sativa subsp. japonica (Rice).